Consider the following 100-residue polypeptide: NADH-quinone oxidoreductase subunit K (100 aa).

3 consecutive transmembrane segments (helical) span residues 4-24 (YEYYVVLSGLLMVLGLIGIII), 29-49 (IAMLLSTELMLNAVNIAFVAF), and 60-80 (VFVFFILTIAAAEAAVGLGLI).

It belongs to the complex I subunit 4L family. As to quaternary structure, NDH-1 is composed of 14 different subunits. Subunits NuoA, H, J, K, L, M, N constitute the membrane sector of the complex.

The protein localises to the cell inner membrane. The catalysed reaction is a quinone + NADH + 5 H(+)(in) = a quinol + NAD(+) + 4 H(+)(out). Its function is as follows. NDH-1 shuttles electrons from NADH, via FMN and iron-sulfur (Fe-S) centers, to quinones in the respiratory chain. The immediate electron acceptor for the enzyme in this species is believed to be ubiquinone. Couples the redox reaction to proton translocation (for every two electrons transferred, four hydrogen ions are translocated across the cytoplasmic membrane), and thus conserves the redox energy in a proton gradient. This is NADH-quinone oxidoreductase subunit K from Persephonella marina (strain DSM 14350 / EX-H1).